Reading from the N-terminus, the 466-residue chain is Glutamate decarboxylase beta (466 aa).

Substrate contacts are provided by Thr-62 and Asn-83. Residues 126–127 (SS), Thr-212, and His-275 contribute to the pyridoxal 5'-phosphate site. The residue at position 276 (Lys-276) is an N6-(pyridoxal phosphate)lysine. An N6-acetyllysine mark is found at Lys-446, Lys-453, and Lys-464.

The protein belongs to the group II decarboxylase family. Homohexamer composed of three dimers. Requires pyridoxal 5'-phosphate as cofactor.

It catalyses the reaction L-glutamate + H(+) = 4-aminobutanoate + CO2. In terms of biological role, converts glutamate to gamma-aminobutyrate (GABA), consuming one intracellular proton in the reaction. The gad system helps to maintain a near-neutral intracellular pH when cells are exposed to extremely acidic conditions. The ability to survive transit through the acidic conditions of the stomach is essential for successful colonization of the mammalian host by commensal and pathogenic bacteria. This is Glutamate decarboxylase beta (gadB) from Escherichia coli O6:H1 (strain CFT073 / ATCC 700928 / UPEC).